The sequence spans 221 residues: Ribosomal RNA small subunit methyltransferase G (221 aa).

Residues Gly85, Phe90, 136–137 (AE), and Arg149 contribute to the S-adenosyl-L-methionine site.

Belongs to the methyltransferase superfamily. RNA methyltransferase RsmG family.

Its subcellular location is the cytoplasm. Specifically methylates the N7 position of a guanine in 16S rRNA. The polypeptide is Ribosomal RNA small subunit methyltransferase G (Porphyromonas gingivalis (strain ATCC BAA-308 / W83)).